Here is a 520-residue protein sequence, read N- to C-terminus: Solute carrier family 2, facilitated glucose transporter member 14 (520 aa).

At 1–29 (MEFHNGGHVSGIGGFLVSLTSRMKPHTLA) the chain is on the cytoplasmic side. Residues 30–50 (VTPALIFAITVATIGSFQFGY) traverse the membrane as a helical segment. Over 51 to 88 (NTGVINAPETIIKEFINKTLTDKANAPPSEVLLTNLWS) the chain is Extracellular. The N-linked (GlcNAc...) asparagine glycan is linked to asparagine 67. The chain crosses the membrane as a helical span at residues 89–109 (LSVAIFSVGGMIGSFSVGLFV). The Cytoplasmic segment spans residues 110 to 117 (NRFGRRNS). Residues 118 to 138 (MLIVNLLAATGGCLMGLCKIA) traverse the membrane as a helical segment. Topologically, residues 139 to 148 (ESVEMLILGR) are extracellular. A helical transmembrane segment spans residues 149–169 (LVIGLFCGLCTGFVPMYIGEI). Topologically, residues 170–177 (SPTALRGA) are cytoplasmic. A helical transmembrane segment spans residues 178-198 (FGTLNQLGIVIGILVAQIFGL). Glutamine 183 is a D-glucose binding site. At 199–207 (ELILGSEEL) the chain is on the extracellular side. The chain crosses the membrane as a helical span at residues 208–228 (WPVLLGFTILPAILQSAALPC). The Cytoplasmic segment spans residues 229 to 293 (CPESPRFLLI…LFRVSSYRQP (65 aa)). Residues 294-314 (IIISIVLQLSQQLSGINAVFY) form a helical membrane-spanning segment. D-glucose contacts are provided by residues 304–305 (QQ) and asparagine 310. Over 315 to 328 (YSTGIFKDAGVQQP) the chain is Extracellular. A helical transmembrane segment spans residues 329–349 (IYATISAGVVNTIFTLLSLFL). Asparagine 339 is a binding site for D-glucose. Residues 350–358 (VERAGRRTL) lie on the Cytoplasmic side of the membrane. Residues 359-379 (HMIGLGGMAFCSTLMTVSLLL) form a helical membrane-spanning segment. Topologically, residues 380 to 392 (KNHYNGMSFVCIG) are extracellular. Residues 393-413 (AILVFVACFEIGPGPIPWFIV) form a helical membrane-spanning segment. The D-glucose site is built by glutamate 402 and tryptophan 410. The Cytoplasmic segment spans residues 414 to 423 (AELFSQGPRP). Residues 424–444 (AAMAVAGCSNWTSNFLVGLLF) traverse the membrane as a helical segment. The Extracellular segment spans residues 445–451 (PSAAYYL). Residues 452 to 472 (GAYVFIIFTGFLITFLAFTFF) form a helical membrane-spanning segment. The Cytoplasmic portion of the chain corresponds to 473-520 (KVPETRGRTFEDITRAFEGQAHGADRSGKDGVMGMNSIEPAKETTTNV). The tract at residues 493 to 520 (AHGADRSGKDGVMGMNSIEPAKETTTNV) is disordered.

This sequence belongs to the major facilitator superfamily. Sugar transporter (TC 2.A.1.1) family. Glucose transporter subfamily. In terms of tissue distribution, mainly expressed in testis. Also expressed in small intestine, liver and kidney.

It localises to the cell membrane. The catalysed reaction is D-glucose(out) = D-glucose(in). It catalyses the reaction L-dehydroascorbate(out) = L-dehydroascorbate(in). Hexose transporter that can mediate the transport of glucose and dehydroascorbate across the cell membrane. This Homo sapiens (Human) protein is Solute carrier family 2, facilitated glucose transporter member 14.